Reading from the N-terminus, the 357-residue chain is MAGLFGTTTSTTTSTLGDLKNDVELGSPPEDSITDLSFNPNPNDPKDFLAVSSWDKKVRVYEIAANGQNQGKVQMEHEGPVFAVDFFKDGTKVISAGADKQAKVLDLASGQAMQVAAHDAPIRCVKYFEAGGTPMAVTGSWDKTIKYWDFRSATPAGTVQCQERVYTMDVKENLLVIGTADRYIDVINLKEPVKFYKTLQSPLKWQTRVVSCFTDSQGFAIGSIEGRCAIQYVEDKDQSMNFSFKCHRDTPQNNVTNVHAVNAISFHPQHGTFSTAGSDGTFHFWDKDAKHRLKGYPNVGGSITATKFNRNGTIFAYAISYDWSKGYQGNTANYPTKVMLHPVLGDECKPRPSVKKR.

Positions 1–31 are disordered; that stretch reads MAGLFGTTTSTTTSTLGDLKNDVELGSPPED. 5 WD repeats span residues 28–71, 76–115, 117–158, 160–197, and 256–295; these read PPED…QNQG, EHEG…AMQV, AHDA…PAGT, QCQE…KFYK, and TNVH…RLKG.

The protein belongs to the WD repeat rae1 family. In terms of assembly, component of the nuclear pore complex (NPC). NPC constitutes the exclusive means of nucleocytoplasmic transport. NPCs allow the passive diffusion of ions and small molecules and the active, nuclear transport receptor-mediated bidirectional transport of macromolecules such as proteins, RNAs, ribonucleoparticles (RNPs), and ribosomal subunits across the nuclear envelope. Due to its 8-fold rotational symmetry, all subunits are present with 8 copies or multiples thereof.

It localises to the nucleus. The protein resides in the nuclear pore complex. The protein localises to the nucleus membrane. Functionally, functions as a component of the nuclear pore complex (NPC). NPC components, collectively referred to as nucleoporins (NUPs), can play the role of both NPC structural components and of docking or interaction partners for transiently associated nuclear transport factors. It is specifically important for nuclear mRNA export. This Chaetomium thermophilum (strain DSM 1495 / CBS 144.50 / IMI 039719) (Thermochaetoides thermophila) protein is mRNA export factor GLE2 (GLE2).